Reading from the N-terminus, the 711-residue chain is Triacylglycerol hydrolase DDHD2 (711 aa).

Residues M1 to S24 are disordered. The WWE domain occupies D30 to R112. S351 functions as the Nucleophile in the catalytic mechanism. The region spanning G385 to M448 is the SAM domain. The residue at position 447 (S447) is a Phosphoserine. 2 disordered regions span residues G449–C470 and L609–S638. The 206-residue stretch at L495–Q700 folds into the DDHD domain. Positions T614 to S624 are enriched in acidic residues.

This sequence belongs to the PA-PLA1 family. Forms homooligomers and, to a much smaller extent, heterooligomers with DDHD1. In terms of tissue distribution, widely expressed (at protein level).

Its subcellular location is the cytoplasm. It is found in the cytosol. The protein resides in the endoplasmic reticulum-Golgi intermediate compartment. It localises to the golgi apparatus. The protein localises to the cis-Golgi network. The catalysed reaction is a triacylglycerol + H2O = a diacylglycerol + a fatty acid + H(+). It carries out the reaction a diacylglycerol + H2O = a monoacylglycerol + a fatty acid + H(+). The enzyme catalyses a 1,3-diacylglycerol + H2O = a 1-acylglycerol + a fatty acid + H(+). It catalyses the reaction a 1-acylglycerol + H2O = glycerol + a fatty acid + H(+). The catalysed reaction is 1,2,3-tri-(9Z-octadecenoyl)-glycerol + H2O = di-(9Z)-octadecenoylglycerol + (9Z)-octadecenoate + H(+). It carries out the reaction di-(9Z)-octadecenoylglycerol + H2O = (9Z-octadecenoyl)-glycerol + (9Z)-octadecenoate + H(+). The enzyme catalyses 1,3-di-(9Z-octadecenoyl)-glycerol + H2O = 1-(9Z-octadecenoyl)-glycerol + (9Z)-octadecenoate + H(+). It catalyses the reaction trihexadecanoylglycerol + H2O = dihexadecanoylglycerol + hexadecanoate + H(+). The catalysed reaction is 1,2-di-(9Z-octadecenoyl)-sn-glycero-3-phosphocholine + H2O = (9Z-octadecenoyl)-sn-glycero-3-phosphocholine + (9Z)-octadecenoate + H(+). It carries out the reaction 1-(9Z-octadecenoyl)-glycerol + H2O = glycerol + (9Z)-octadecenoate + H(+). The enzyme catalyses 1,2-di-(9Z-octadecenoyl)-sn-glycero-3-phosphate + H2O = 2-(9Z-octadecenoyl)-sn-glycero-3-phosphate + (9Z)-octadecenoate + H(+). It catalyses the reaction 1-hexadecanoyl-2-(9Z-octadecenoyl)-sn-glycero-3-phosphate + H2O = 2-(9Z-octadecenoyl)-sn-glycero-3-phosphate + hexadecanoate + H(+). The catalysed reaction is 1-hexadecanoyl-2-(9Z-octadecenoyl)-sn-glycero-3-phosphoethanolamine + H2O = 2-(9Z-octadecenoyl)-sn-glycero-3-phosphoethanolamine + hexadecanoate + H(+). It carries out the reaction 1-hexadecanoyl-2-(9Z-octadecenoyl)-sn-glycero-3-phospho-L-serine + H2O = 2-(9Z-octadecenoyl)-sn-glycero-3-phospho-L-serine + hexadecanoate + H(+). The enzyme catalyses 1-hexadecanoyl-2-(9Z-octadecenoyl)-sn-glycero-3-phosphocholine + H2O = 2-(9Z-octadecenoyl)-sn-glycero-3-phosphocholine + hexadecanoate + H(+). In terms of biological role, diacylglycerol (DAG) and triacylglycerol (TAG) lipase required for proper lipid homeostasis in the central nervous system. It cooperates with PNPLA2/ATGL in neuronal TAG catabolism and hydrolyzes sn-1,3 DAG downstream of PNPLA2/ATGL. In vitro, it also acts as a phospholipase that hydrolyzes preferentially phosphatidic acids, including 1,2-dioleoyl-sn-phosphatidic acid, phosphatidylcholine and phosphatidylethanolamine. Specifically binds to phosphatidylinositol 3-phosphate (PI(3)P), phosphatidylinositol 4-phosphate (PI(4)P), phosphatidylinositol 5-phosphate (PI(5)P) and possibly phosphatidylinositol 4,5-bisphosphate (PI(4,5)P2). May be involved in the maintenance of the endoplasmic reticulum and/or Golgi structures. May regulate the transport between Golgi apparatus and plasma membrane. This Homo sapiens (Human) protein is Triacylglycerol hydrolase DDHD2.